A 122-amino-acid chain; its full sequence is Large ribosomal subunit protein uL14c (122 aa).

The protein belongs to the universal ribosomal protein uL14 family. In terms of assembly, part of the 50S ribosomal subunit.

It localises to the plastid. Its subcellular location is the chloroplast. In terms of biological role, binds to 23S rRNA. The polypeptide is Large ribosomal subunit protein uL14c (Panax ginseng (Korean ginseng)).